Reading from the N-terminus, the 80-residue chain is Photosystem II extrinsic protein V (80 aa).

A heme-binding site is contributed by M47.

It belongs to the cytochrome c family. PsbV subfamily. In terms of assembly, PSII is composed of 1 copy each of membrane proteins PsbA, PsbB, PsbC, PsbD, PsbE, PsbF, PsbH, PsbI, PsbJ, PsbK, PsbL, PsbM, PsbT, PsbY, PsbZ, Psb30/Ycf12, at least 3 peripheral proteins of the oxygen-evolving complex and a large number of cofactors. It forms dimeric complexes. The cofactor is heme.

The protein localises to the plastid. The protein resides in the chloroplast thylakoid membrane. In terms of biological role, one of the extrinsic, lumenal subunits of photosystem II (PSII). PSII is a light-driven water plastoquinone oxidoreductase, using light energy to abstract electrons from H(2)O, generating a proton gradient subsequently used for ATP formation. The extrinsic proteins stabilize the structure of photosystem II oxygen-evolving complex (OEC), the ion environment of oxygen evolution and protect the OEC against heat-induced inactivation. The sequence is that of Photosystem II extrinsic protein V from Thalassiosira weissflogii (Marine diatom).